Consider the following 419-residue polypeptide: GTPase Obg (419 aa).

The 158-residue stretch at 1–158 folds into the Obg domain; the sequence is MHFVDEAFNE…FKIKTELKVL (158 aa). The OBG-type G domain occupies 159–324; the sequence is ADIGLLGFPS…LKYKMSSFLQ (166 aa). Residues 165–172, 190–194, 211–214, 278–281, and 305–307 contribute to the GTP site; these read GFPSVGKS, FTTIK, DLPG, NKMD, and SLV. Mg(2+) contacts are provided by S172 and T192. The 78-residue stretch at 342–419 folds into the OCT domain; sequence TLTDNLKTIS…KICDRLFDFL (78 aa).

It belongs to the TRAFAC class OBG-HflX-like GTPase superfamily. OBG GTPase family. As to quaternary structure, monomer. Mg(2+) serves as cofactor.

The protein resides in the cytoplasm. Its function is as follows. An essential GTPase which binds GTP, GDP and possibly (p)ppGpp with moderate affinity, with high nucleotide exchange rates and a fairly low GTP hydrolysis rate. Plays a role in control of the cell cycle, stress response, ribosome biogenesis and in those bacteria that undergo differentiation, in morphogenesis control. This chain is GTPase Obg, found in Aster yellows witches'-broom phytoplasma (strain AYWB).